Reading from the N-terminus, the 287-residue chain is 1-acyl-sn-glycerol-3-phosphate acyltransferase alpha (287 aa).

The N-terminal stretch at 1-26 is a signal peptide; it reads MELWPGAGTLLLLLFLLLLLLLPTLW. At 27–37 the chain is on the lumenal side; that stretch reads FCSPSAKYFFK. Residues 38–58 traverse the membrane as a helical segment; sequence MAFYNGWILFLAVLAIPVCAV. The Cytoplasmic segment spans residues 59-127; the sequence is RGRNVENMKI…PGRCVPIAKR (69 aa). Positions 104–109 match the HXXXXD motif motif; sequence HQSSLD. A helical transmembrane segment spans residues 128 to 148; the sequence is ELLWAGSAGLACWLAGVIFID. The Lumenal segment spans residues 149 to 287; sequence RKRTGDAISV…KPGGVGEAGL (139 aa). An EGTR motif motif is present at residues 178-181; that stretch reads EGTR.

The protein belongs to the 1-acyl-sn-glycerol-3-phosphate acyltransferase family.

Its subcellular location is the endoplasmic reticulum membrane. The enzyme catalyses a 1-acyl-sn-glycero-3-phosphate + an acyl-CoA = a 1,2-diacyl-sn-glycero-3-phosphate + CoA. The catalysed reaction is 1-(9Z-octadecenoyl)-sn-glycero-3-phosphate + (9Z)-octadecenoyl-CoA = 1,2-di-(9Z-octadecenoyl)-sn-glycero-3-phosphate + CoA. It carries out the reaction 1-(9Z-octadecenoyl)-sn-glycero-3-phosphate + hexadecanoyl-CoA = 1-(9Z)-octadecenoyl-2-hexadecanoyl-sn-glycero-3-phosphate + CoA. It catalyses the reaction heptadecanoyl-CoA + 1-(9Z-octadecenoyl)-sn-glycero-3-phosphate = 1-(9Z)-octadecenoyl-2-heptadecanoyl-sn-glycero-3-phosphate + CoA. The enzyme catalyses 1-(9Z-octadecenoyl)-sn-glycero-3-phosphate + octadecanoyl-CoA = 1-(9Z-octadecenoyl)-2-octadecanoyl-sn-glycero-3-phosphate + CoA. The catalysed reaction is 1-(9Z-octadecenoyl)-sn-glycero-3-phosphate + (9Z,12Z)-octadecadienoyl-CoA = 1-(9Z)-octadecenoyl-2-(9Z,12Z)-octadecadienoyl-sn-glycero-3-phosphate + CoA. It carries out the reaction 1-(9Z-octadecenoyl)-sn-glycero-3-phosphate + tetradecanoyl-CoA = 1-(9Z)-octadecenoyl-2-tetradecanoyl-sn-glycero-3-phosphate + CoA. It catalyses the reaction pentadecanoyl-CoA + 1-(9Z-octadecenoyl)-sn-glycero-3-phosphate = 1-(9Z)-octadecenoyl-2-pentadecanoyl-sn-glycero-3-phosphate + CoA. The enzyme catalyses 1-hexadecanoyl-sn-glycero-3-phosphate + (9Z)-octadecenoyl-CoA = 1-hexadecanoyl-2-(9Z-octadecenoyl)-sn-glycero-3-phosphate + CoA. The catalysed reaction is 1-(9Z,12Z,15Z)-octadecatrienoyl-sn-glycero-3-phosphate + (9Z)-octadecenoyl-CoA = 1-(9Z,12Z,15Z)-octadecatrienoyl-2-(9Z)-octadecenoyl-sn-glycero-3-phosphate + CoA. It carries out the reaction 1-(6Z,9Z,12Z-octadecatrienoyl)-sn-glycero-3-phosphate + (9Z)-octadecenoyl-CoA = (6Z,9Z,12Z)-octadecatrienoyl-2-(9Z)-octadecenoyl-sn-glycero-3-phosphate + CoA. It catalyses the reaction 1-eicosanoyl-sn-glycero-3-phosphate + (9Z)-octadecenoyl-CoA = 1-eicosanoyl-2-(9Z)-octadecenoyl-sn-glycero-3-phosphate + CoA. The enzyme catalyses 1-tetradecanoyl-sn-glycerol 3-phosphate + (9Z)-octadecenoyl-CoA = 1-tetradecanoyl-2-(9Z)-octadecenoyl-sn-glycero-3-phosphate + CoA. The catalysed reaction is 1-(9Z-octadecenoyl)-sn-glycero-3-phosphate + (5Z,8Z,11Z,14Z)-eicosatetraenoyl-CoA = 1-(9Z)-octadecenoyl-2-(5Z,8Z,11Z,14Z)-eicosatetraenoyl-sn-glycero-3-phosphate + CoA. It carries out the reaction 1-(9Z-octadecenoyl)-sn-glycero-3-phosphate + dodecanoyl-CoA = 1-(9Z)-octadecenoyl-2-dodecanoyl-sn-glycero-3-phosphate + CoA. It catalyses the reaction (6Z)-octadecenoyl-CoA + 1-(9Z-octadecenoyl)-sn-glycero-3-phosphate = 1-(9Z)-octadecenoyl-2-(6Z)-octadecenoyl-sn-glycero-3-phosphate + CoA. The enzyme catalyses (11Z)-octadecenoyl-CoA + 1-(9Z-octadecenoyl)-sn-glycero-3-phosphate = 1-(9Z)-octadecenoyl-2-(11Z)-octadecenoyl-sn-glycero-3-phosphate + CoA. The catalysed reaction is (9Z)-hexadecenoyl-CoA + 1-(9Z-octadecenoyl)-sn-glycero-3-phosphate = 1-(9Z-octadecenoyl)-2-(9Z-hexadecenoyl)-sn-glycero-3-phosphate + CoA. The protein operates within phospholipid metabolism; CDP-diacylglycerol biosynthesis; CDP-diacylglycerol from sn-glycerol 3-phosphate: step 2/3. Its function is as follows. Converts 1-acyl-sn-glycerol-3-phosphate (lysophosphatidic acid or LPA) into 1,2-diacyl-sn-glycerol-3-phosphate (phosphatidic acid or PA) by incorporating an acyl moiety at the sn-2 position of the glycerol backbone. The polypeptide is 1-acyl-sn-glycerol-3-phosphate acyltransferase alpha (AGPAT1) (Bos taurus (Bovine)).